The sequence spans 125 residues: Small ribosomal subunit protein bS6 (125 aa).

It belongs to the bacterial ribosomal protein bS6 family.

Binds together with bS18 to 16S ribosomal RNA. This Campylobacter jejuni subsp. jejuni serotype O:23/36 (strain 81-176) protein is Small ribosomal subunit protein bS6.